The chain runs to 127 residues: MSKILKQLEKPVLDFISEKYNRKIIPNRYDLDDFIDNYISDKDEFQEIDECELDKYCENLYVQLESEGKIYKVGNKKSYIDIVQKKDYISCSEHQMVKAIKNHKRTDCKIVFRDTEFEVDSSGRYII.

This is an uncharacterized protein from Acanthamoeba polyphaga (Amoeba).